A 475-amino-acid chain; its full sequence is Trifunctional enzyme subunit beta, mitochondrial (475 aa).

The transit peptide at 1 to 34 directs the protein to the mitochondrion; that stretch reads MTTILTSTFRNLSTTSKWALRFSVRPLSCSSQVQ. Lys53 is subject to N6-succinyllysine. Lys73 is subject to N6-acetyllysine; alternate. Lys73 is modified (N6-succinyllysine; alternate). The active-site Acyl-thioester intermediate is the Cys139. The stretch at 174–221 is an intramembrane region; sequence IRHSRNMRKMMLDLNKAKTLAQRLSLLTKFRLNFLSPELPAVAEFSTN. Lys189 carries the post-translational modification N6-acetyllysine; alternate. Lys189 carries the N6-succinyllysine; alternate modification. N6-succinyllysine occurs at positions 191, 273, and 292. Residue Lys294 is modified to N6-acetyllysine; alternate. Lys294 bears the N6-succinyllysine; alternate mark. Position 299 is an N6-acetyllysine (Lys299). Lys333 carries the post-translational modification N6-acetyllysine; alternate. At Lys333 the chain carries N6-succinyllysine; alternate. Residues Lys349 and Lys362 each carry the N6-acetyllysine modification. The active-site Proton donor/acceptor is the Cys459.

Belongs to the thiolase-like superfamily. Thiolase family. In terms of assembly, heterotetramer of 2 alpha/HADHA and 2 beta/HADHB subunits; forms the mitochondrial trifunctional enzyme. Also purified as higher order heterooligomers including a 4 alpha/HADHA and 4 beta/HADHB heterooligomer which physiological significance remains unclear. The mitochondrial trifunctional enzyme interacts with MTLN. Interacts with RSAD2/viperin.

The protein resides in the mitochondrion. It localises to the mitochondrion inner membrane. Its subcellular location is the mitochondrion outer membrane. It is found in the endoplasmic reticulum. The enzyme catalyses an acyl-CoA + acetyl-CoA = a 3-oxoacyl-CoA + CoA. It catalyses the reaction butanoyl-CoA + acetyl-CoA = 3-oxohexanoyl-CoA + CoA. It carries out the reaction hexanoyl-CoA + acetyl-CoA = 3-oxooctanoyl-CoA + CoA. The catalysed reaction is octanoyl-CoA + acetyl-CoA = 3-oxodecanoyl-CoA + CoA. The enzyme catalyses decanoyl-CoA + acetyl-CoA = 3-oxododecanoyl-CoA + CoA. It catalyses the reaction dodecanoyl-CoA + acetyl-CoA = 3-oxotetradecanoyl-CoA + CoA. It carries out the reaction tetradecanoyl-CoA + acetyl-CoA = 3-oxohexadecanoyl-CoA + CoA. The protein operates within lipid metabolism; fatty acid beta-oxidation. In terms of biological role, mitochondrial trifunctional enzyme catalyzes the last three of the four reactions of the mitochondrial beta-oxidation pathway. The mitochondrial beta-oxidation pathway is the major energy-producing process in tissues and is performed through four consecutive reactions breaking down fatty acids into acetyl-CoA. Among the enzymes involved in this pathway, the trifunctional enzyme exhibits specificity for long-chain fatty acids. Mitochondrial trifunctional enzyme is a heterotetrameric complex composed of two proteins, the trifunctional enzyme subunit alpha/HADHA carries the 2,3-enoyl-CoA hydratase and the 3-hydroxyacyl-CoA dehydrogenase activities, while the trifunctional enzyme subunit beta/HADHB described here bears the 3-ketoacyl-CoA thiolase activity. This chain is Trifunctional enzyme subunit beta, mitochondrial (Hadhb), found in Rattus norvegicus (Rat).